Here is a 1103-residue protein sequence, read N- to C-terminus: Retinal guanylyl cyclase 2 (1103 aa).

The first 46 residues, 1 to 46 (MFLAPWPFSHLMLWFVTLGRQRGQHGLASFKLLWCLWLLVLMSLPL), serve as a signal peptide directing secretion. Residues 47–465 (QVWAPPYKIG…DGRICQGGIN (419 aa)) are Extracellular-facing. A disulfide bridge links C104 with C132. A helical membrane pass occupies residues 466–490 (PTFALMVCLALLIALLSINGFAYFI). Residues 491–1103 (RHRINKIQLI…FQRRKQKSSW (613 aa)) are Cytoplasmic-facing. The 281-residue stretch at 532–812 (FQITSEVQSG…DEIFNQFKTF (281 aa)) folds into the Protein kinase domain. Positions 884-1014 (TLYFSDIVGF…DTVNTASRME (131 aa)) constitute a Guanylate cyclase domain.

Belongs to the adenylyl cyclase class-4/guanylyl cyclase family. As to quaternary structure, homodimer. Interacts with RD3; promotes the exit of GUCY2F from the endoplasmic reticulum and its trafficking to the photoreceptor outer segments. There are 9 conserved cysteine residues in sensory guanylate cyclases, 6 in the extracellular domain, which may be involved in intra- or interchain disulfide bonds. Expressed specifically in retina.

It localises to the membrane. Its subcellular location is the photoreceptor outer segment membrane. It catalyses the reaction GTP = 3',5'-cyclic GMP + diphosphate. Its activity is regulated as follows. Activated by GUCA1B when free calcium ions concentration is low, and inhibited by GUCA1B when free calcium ions concentration is high. Inhibited by RD3. In terms of biological role, responsible for the synthesis of cyclic GMP (cGMP) in rods and cones of photoreceptors. Plays an essential role in phototransduction, by mediating cGMP replenishment. May also participate in the trafficking of membrane-asociated proteins to the photoreceptor outer segment membrane. The protein is Retinal guanylyl cyclase 2 (GUCY2F) of Bos taurus (Bovine).